The following is an 801-amino-acid chain: Phenylalanine--tRNA ligase beta subunit (801 aa).

The tRNA-binding domain maps to 39–153 (AAGLSKIVVG…EDAVPGEEVF (115 aa)). Residues 406–481 (TSDVEVSSTL…RIYGYDRLPT (76 aa)) form the B5 domain. Residues D459, D465, E468, and E469 each coordinate Mg(2+). Residues 708–801 (TKFPAVSRDV…LEEKVNAEVR (94 aa)) form the FDX-ACB domain.

This sequence belongs to the phenylalanyl-tRNA synthetase beta subunit family. Type 1 subfamily. As to quaternary structure, tetramer of two alpha and two beta subunits. Requires Mg(2+) as cofactor.

Its subcellular location is the cytoplasm. It catalyses the reaction tRNA(Phe) + L-phenylalanine + ATP = L-phenylalanyl-tRNA(Phe) + AMP + diphosphate + H(+). This Streptococcus pneumoniae serotype 4 (strain ATCC BAA-334 / TIGR4) protein is Phenylalanine--tRNA ligase beta subunit.